We begin with the raw amino-acid sequence, 293 residues long: MMRIALFLLTNLAVMVVFGLVLSLTGIQSSSVQGLMIMALLFGFGGSFVSLLMSKWMALRSVGGEVIEQPRNERERWLVNTVATQARQAGIAMPQVAIYHAPDINAFATGARRDASLVAVSTGLLQNMSPDEAEAVIAHEISHIANGDMVTMTLIQGVVNTFVIFISRILAQLAAGFMGGNRDEGEESNGNPLIYFAVATVLELVFGILASIITMWFSRHREFHADAGSAKLVGREKMIAALQRLKTSYEPQEATSMMAFCINGKSKSLSELFMTHPPLDKRIEALRTGEYLK.

2 helical membrane passes run 4–24 (IALFLLTNLAVMVVFGLVLSL) and 34–54 (GLMIMALLFGFGGSFVSLLMS). His139 provides a ligand contact to Zn(2+). Glu140 is an active-site residue. His143 contributes to the Zn(2+) binding site. 2 helical membrane-spanning segments follow: residues 158 to 178 (VVNTFVIFISRILAQLAAGFM) and 193 to 213 (LIYFAVATVLELVFGILASII). Glu222 serves as a coordination point for Zn(2+).

The protein belongs to the peptidase M48B family. Zn(2+) serves as cofactor.

The protein localises to the cell inner membrane. The chain is Protease HtpX from Escherichia coli (strain ATCC 8739 / DSM 1576 / NBRC 3972 / NCIMB 8545 / WDCM 00012 / Crooks).